Here is a 770-residue protein sequence, read N- to C-terminus: Integrin beta-2 (770 aa).

Positions 1-22 (MLPQRPQLLLLAGLLSLQSVLS) are cleaved as a signal peptide. Glutamine 23 carries the pyrrolidone carboxylic acid modification. At 23–701 (QECTKYKVST…DMLECVKGPN (679 aa)) the chain is on the extracellular side. The PSI domain maps to 24–74 (ECTKYKVSTCRDCIESGPSCAWCQKLNFTGQGEPDSTRCDTRAQLLSKGCP). 28 disulfides stabilise this stretch: cysteine 25–cysteine 43, cysteine 33–cysteine 447, cysteine 36–cysteine 62, cysteine 46–cysteine 73, cysteine 191–cysteine 198, cysteine 246–cysteine 286, cysteine 386–cysteine 400, cysteine 420–cysteine 445, cysteine 449–cysteine 467, cysteine 459–cysteine 470, cysteine 472–cysteine 481, cysteine 483–cysteine 514, cysteine 497–cysteine 512, cysteine 506–cysteine 517, cysteine 519–cysteine 534, cysteine 536–cysteine 559, cysteine 541–cysteine 557, cysteine 549–cysteine 562, cysteine 564–cysteine 573, cysteine 575–cysteine 598, cysteine 582–cysteine 596, cysteine 590–cysteine 601, cysteine 603–cysteine 612, cysteine 615–cysteine 618, cysteine 622–cysteine 663, cysteine 628–cysteine 647, cysteine 631–cysteine 643, and cysteine 671–cysteine 696. N-linked (GlcNAc...) asparagine glycans are attached at residues asparagine 50 and asparagine 116. The 240-residue stretch at 124–363 (GYPIDLYYLM…ELIKSAYNKL (240 aa)) folds into the VWFA domain. 2 residues coordinate Mg(2+): serine 136 and serine 138. 4 residues coordinate Ca(2+): serine 138, aspartate 141, aspartate 142, and aspartate 173. Ca(2+)-binding residues include asparagine 229, aspartate 231, proline 233, and glutamate 234. Glutamate 234 is a binding site for Mg(2+). N-linked (GlcNAc...) asparagine glycosylation is present at asparagine 254. Residues aspartate 264 and glutamate 347 each coordinate Ca(2+). A Cell attachment site motif is present at residues 397–399 (RGD). 4 consecutive I-EGF domains span residues 449 to 482 (CREA…KNCE), 483 to 535 (CQTH…QFCE), 536 to 574 (CDNV…SACQ), and 575 to 613 (CLKS…PLCI). Asparagine 501 carries N-linked (GlcNAc...) asparagine glycosylation. An N-linked (GlcNAc...) asparagine glycan is attached at asparagine 642. Residues 702 to 724 (IAAIVGGTVGGVVLVGILLLAIW) traverse the membrane as a helical segment. The Cytoplasmic segment spans residues 725–770 (KALTHLSDLREYHRFEKEKLKSQWNNDNPLFKSATTTVMNPKFAES). Residues serine 746 and serine 757 each carry the phosphoserine modification. Residues threonine 759 and threonine 761 each carry the phosphothreonine modification.

This sequence belongs to the integrin beta chain family. As to quaternary structure, heterodimer of an alpha and a beta subunit. The ITGB2 beta subunit associates with the ITGAL, ITGAM, ITGAX or ITGAD alpha subunits. Found in a complex with CD177 and ITGAM/CD11b. Interacts with FGR. Interacts with COPS5 and RANBP9. Interacts with FLNA (via filamin repeats 4, 9, 12, 17, 19, 21, and 23). Interacts with THBD. Post-translationally, both Ser-746 and Ser-757 become phosphorylated when T-cells are exposed to phorbol esters. Phosphorylation on Thr-759 (but not on Ser-757) allows interaction with 14-3-3 proteins.

The protein resides in the cell membrane. The protein localises to the membrane raft. In terms of biological role, integrin ITGAL/ITGB2 is a receptor for ICAM1, ICAM2, ICAM3 and ICAM4. Integrin ITGAL/ITGB2 is also a receptor for the secreted form of ubiquitin-like protein ISG15; the interaction is mediated by ITGAL. Integrins ITGAM/ITGB2 and ITGAX/ITGB2 are receptors for the iC3b fragment of the third complement component and for fibrinogen. Integrin ITGAX/ITGB2 recognizes the sequence G-P-R in fibrinogen alpha-chain. Integrin ITGAM/ITGB2 recognizes P1 and P2 peptides of fibrinogen gamma chain. Integrin ITGAM/ITGB2 is also a receptor for factor X. Integrin ITGAD/ITGB2 is a receptor for ICAM3 and VCAM1. Contributes to natural killer cell cytotoxicity. Involved in leukocyte adhesion and transmigration of leukocytes including T-cells and neutrophils. Triggers neutrophil transmigration during lung injury through PTK2B/PYK2-mediated activation. Integrin ITGAL/ITGB2 in association with ICAM3, contributes to apoptotic neutrophil phagocytosis by macrophages. In association with alpha subunit ITGAM/CD11b, required for CD177-PRTN3-mediated activation of TNF primed neutrophils. The polypeptide is Integrin beta-2 (ITGB2) (Ovis canadensis (Bighorn sheep)).